The primary structure comprises 371 residues: DNA replication and repair protein RecF (371 aa).

30 to 37 (GQNGMGKT) lines the ATP pocket.

This sequence belongs to the RecF family.

The protein localises to the cytoplasm. The RecF protein is involved in DNA metabolism; it is required for DNA replication and normal SOS inducibility. RecF binds preferentially to single-stranded, linear DNA. It also seems to bind ATP. The polypeptide is DNA replication and repair protein RecF (Phocaeicola vulgatus (strain ATCC 8482 / DSM 1447 / JCM 5826 / CCUG 4940 / NBRC 14291 / NCTC 11154) (Bacteroides vulgatus)).